A 341-amino-acid polypeptide reads, in one-letter code: uncharacterized protein (341 aa).

Residues 153–179 (AYTLSEKVMNAEREAEETRETIIREAH) are a coiled coil. Residues 319–335 (EQLQNPAPESAPSTSKT) are compositionally biased toward polar residues. A disordered region spans residues 319 to 341 (EQLQNPAPESAPSTSKTLRSKNP).

This is an uncharacterized protein from Coxiella burnetii (strain RSA 493 / Nine Mile phase I).